The following is a 236-amino-acid chain: Small ribosomal subunit protein uS2c (236 aa).

Belongs to the universal ribosomal protein uS2 family.

It localises to the plastid. Its subcellular location is the chloroplast. The protein is Small ribosomal subunit protein uS2c (rps2) of Panax ginseng (Korean ginseng).